The sequence spans 555 residues: Formate--tetrahydrofolate ligase (555 aa).

Residue Thr64–Thr71 coordinates ATP.

Belongs to the formate--tetrahydrofolate ligase family.

The enzyme catalyses (6S)-5,6,7,8-tetrahydrofolate + formate + ATP = (6R)-10-formyltetrahydrofolate + ADP + phosphate. It functions in the pathway one-carbon metabolism; tetrahydrofolate interconversion. The chain is Formate--tetrahydrofolate ligase from Bacteroides thetaiotaomicron (strain ATCC 29148 / DSM 2079 / JCM 5827 / CCUG 10774 / NCTC 10582 / VPI-5482 / E50).